The primary structure comprises 368 residues: Propane 2-monooxygenase, hydroxylase component small subunit (368 aa).

Basic and acidic residues predominate over residues 1-17 (MSAPEKPRERSFPKIEF). The tract at residues 1 to 32 (MSAPEKPRERSFPKIEFTDSEAGAKEFPSSKS) is disordered.

This sequence belongs to the TmoE/XamoE family. In terms of assembly, the propane 2-monooxygenase multicomponent enzyme system is composed of an electron transfer component and a monooxygenase component interacting with the effector protein MimD. The electron transfer component is composed of a reductase (MimB), and the monooxygenase component is formed by a large subunit (MimA) and a small subunit (MimC). Requires the presence of the chaperonin-like protein MimG to ensure a productive folding, resulting of a soluble MimC, which leads to the active form of MimABCD.

The catalysed reaction is propane + NADH + O2 + H(+) = propan-2-ol + NAD(+) + H2O. The enzyme catalyses acetone + NADH + O2 + H(+) = hydroxyacetone + NAD(+) + H2O. It carries out the reaction butan-2-one + NADH + O2 + H(+) = 1-hydroxy-2-butanone + NAD(+) + H2O. It catalyses the reaction phenol + NADH + O2 + H(+) = hydroquinone + NAD(+) + H2O. Functionally, component of the propane 2-monooxygenase multicomponent enzyme system which is involved in the degradation of propane via the O2-dependent hydroxylation of propane. Also involved in the degradation of acetone via the O2-dependent hydroxylation of acetone. Also able to catalyze the oxidation of phenol, methylethylketone (2-butanone), 1-propanol and 2-propanol. This is Propane 2-monooxygenase, hydroxylase component small subunit from Mycolicibacterium smegmatis (strain ATCC 700084 / mc(2)155) (Mycobacterium smegmatis).